Consider the following 1033-residue polypeptide: NACHT, LRR and PYD domains-containing protein 3 (1033 aa).

Residues 1 to 91 (MTSVRCKLAQ…WEKAKKDQPE (91 aa)) form the Pyrin domain. Ser3 is modified (phosphoserine). Cys6 and Cys104 are joined by a disulfide. Tyr11 is modified (phosphotyrosine). Cys126 carries the S-palmitoyl cysteine lipid modification. The segment at 127 to 130 (KKKK) is required for binding to phosphatidylinositol 4-phosphate (PtdIns4P). Phosphotyrosine; by BTK is present on residues Tyr132, Tyr136, and Tyr145. The region spanning 136–206 (YRRHVRSRFY…SSLKLELLFE (71 aa)) is the FISNA domain. Position 157 is a phosphoserine (Ser157). Tyr164 carries the post-translational modification Phosphotyrosine; by BTK. Thr165 is a binding site for ATP. Ser194 is subject to Phosphoserine; by MAPK8. Ser197 is subject to Phosphoserine. The region spanning 216–532 (HTVVFQGAAG…EFFAAMYYLL (317 aa)) is the NACHT domain. Residue 222-230 (GAAGIGKTI) coordinates ATP. Ser261 carries the post-translational modification Phosphoserine. Ser291 is subject to Phosphoserine; by PKD/PRKD1. Lys320 participates in a covalent cross-link: Glycyl lysine isopeptide (Lys-Gly) (interchain with G-Cter in ubiquitin). The residue at position 330 (Ser330) is a Phosphoserine. The KFERQ-like motif 1 signature appears at 351–355 (LEKLQ). Residue Lys426 forms a Glycyl lysine isopeptide (Lys-Gly) (interchain with G-Cter in ubiquitin) linkage. His518 provides a ligand contact to ATP. A KFERQ-like motif 2 motif is present at residues 601 to 605 (QVRLE). Lys687 is covalently cross-linked (Glycyl lysine isopeptide (Lys-Gly) (interchain with G-Cter in ubiquitin)). Phosphoserine occurs at positions 725 and 732. LRR repeat units lie at residues 739 to 759 (SLTE…RVLC), 768 to 789 (NIQR…DISS), 796 to 816 (KLVE…RLLC), 825 to 846 (NLQK…DLAL), and 853 to 873 (SLTR…QVLC). A KFERQ-like motif 3 motif is present at residues 795-799 (QKLVE). The residue at position 803 (Ser803) is a Phosphoserine; by CSNK1A1. S-palmitoyl cysteine attachment occurs at residues Cys834, Cys835, and Cys841. The residue at position 858 (Tyr858) is a Phosphotyrosine. Lys875 participates in a covalent cross-link: Glycyl lysine isopeptide (Lys-Gly) (interchain with G-Cter in ubiquitin). LRR repeat units follow at residues 882 to 903 (NLQK…ALTS), 910 to 930 (NFTH…RLLC), 939 to 960 (KLQM…NLST), and 967 to 988 (SLRK…TLCE). Cys955 carries S-palmitoyl cysteine lipidation. Residue Lys970 forms a Glycyl lysine isopeptide (Lys-Gly) (interchain with G-Cter in ubiquitin) linkage. Residues 988–992 (EVLKQ) carry the KFERQ-like motif 4 motif. Ser1032 bears the Phosphoserine mark.

It belongs to the NLRP family. As to quaternary structure, sensor component of NLRP3 inflammasomes; inflammasomes are supramolecular complexes that assemble in the cytosol in response to pathogens and other damage-associated signals and play critical roles in innate immunity and inflammation. The core of NLRP3 inflammasomes consists of a signal sensor component (NLRP3), an adapter (PYCARD/ASC), which recruits an effector pro-inflammatory caspase (CASP1 and, possibly, CASP4 and CASP5). Homodecamer; inactive NLRP3 forms homodecameric double-ring cages that hide pyrin domains within NACHT-LRR rings to avoid premature activation. Interacts (via pyrin domain) with PYCARD/ASC (via pyrin domain); interaction is direct. Interacts (via LRR repeat domain) with NEK7 (via N-terminus); the interaction is required for the formation of the complex NLRP3:PYCARD, oligomerization of PYCARD/ASC and activation of CASP1. Interacts (via LRR repeat domain) with NR4A1/Nur77 (via N-terminus); the interaction is direct, requires activation of NR4A1 by its ligands NBRE-containing dsDNA and lipopolysaccharide, and stimulates the association of NLRP3 with NEK7 for non-canonical NLRP3 inflammasome activation. Interacts with CARD8; leading to inhibit formation of the NLRP3 inflammasome. Interacts with MEFV; this interaction targets NLRP3 to degradation by autophagy, hence preventing excessive IL1B- and IL18-mediated inflammation. Interacts with EIF2AK2/PKR; this interaction requires EIF2AK2 activity, is accompanied by EIF2AK2 autophosphorylation and promotes inflammasome assembly in response to specific stimuli. Interacts with GBP5 (via DAPIN domain); this interaction promotes inflammasome assembly in response to microbial and soluble, but not crystalline, agents. Interacts with PML (isoform PML-1) (via the leucine-rich repeat (LRR) domain); PML-mediated increase in NLRP3 inflammasome activation does not depend upon this interaction. Interacts (via NACHT domain) with DHX33 (via DEAH box); NLRP3 activation in presence of cytosolic dsRNA is mediated by DHX33. Interacts (via NACHT and LRR domains) with ARRB2; this interaction is direct and inducible by polyunsaturated fatty acids (PUFAs). Interacts (via NACHT domain) with DDX3X under both LPS-primed and inflammasome-activating conditions. Interacts with IRF4 (via the LRR domain); this interaction is direct and is required for optimal IRF4 binding to IL4 promoter and efficient IL4 transactivation during differentiation of Th2 helper T-cells. Interacts with MAVS; promoting localization to mitochondria and activation of the NLRP3 inflammasome. Interacts with MARK4; promoting localization of NLRP3 to the microtubule organizing center (MTOC). Interacts with TRIM50; this interaction also promotes NLRP3 oligomerization and subsequent inflammasome activation. Interacts with IRGM; preventing NLRP3 inflammasome assembly and promoting NLRP3 degradation. Interacts (via KFERQ-like motifs) with HSPA8/HSC70; promoting NLRP3 degradation by the chaperone-mediated autophagy pathway. Interacts (via NACHT and LLR domains) with ABHD8; this interaction is enhanced in the presence of NLRP3 inflammasome inducers, such as ATP, nigericin, silica, or alum. Interaction with ABHD8 leads the recruitment of ZDHHC12, hence facilitating NLRP3 palmitoylation and degradation by the chaperone-mediated autophagy pathway (CMA), therefore attenuating NLRP3 inflammasome activation. In terms of processing, phosphorylation at Ser-194 by MAPK8/JNK1 increases inflammasome activation by promoting deubiquitination by BRCC3 and NLRP3 homooligomerization. Phosphorylation at Ser-803 by CSNK1A1 prevents inflammasome activation by preventing NEK7 recruitment. Phosphorylation at Ser-3 in the pyrin domain inhibits homomultimerization of NLRP3 and activation of the NLRP3 inflammasome: dephosphorylation by protein phosphatase 2A (PP2A) promotes assembly of the NLRP3 inflammasome. Phosphorylation at Ser-291 by PKD/PRKD1 promotes NLRP3 inflammasome assembly. Phosphorylation by ERK1/MAPK3 promotes NLRP3 inflammasome assembly. Phosphorylation by BTK (at Tyr-132, Tyr-136, Tyr-145 and Tyr-164) in the region that mediates binding to phosphatidylinositol phosphate, promotes relocalization of NLRP3 and assembly of the NLRP3 inflammasome. Phosphorylation at Tyr-858 inhibits NLRP3 inflammasome assembly: dephosphorylation by PTPN22 promotes inflammasome activation Phosphorylated by LATS1 and LATS2 at Ser-261 following palmitoylation by ZDHHC1, promoting its relocalization to the microtubule organizing center (MTOC), where NLRP3 is activated by NEK7, leading to inflammasome assembly and activation. Ubiquitinated; undergoes both 'Lys-48'- and 'Lys-63'-linked polyubiquitination. Ubiquitination does not lead to degradation, but inhibits inflammasome activation. Deubiquitination is catalyzed by BRCC3 and associated with NLRP3 activation and inflammasome assembly. This process can be induced by the activation of Toll-like receptors (by LPS), through a non-transcriptional pathway dependent on the mitochondrial production of reactive oxygen species, and by ATP. Ubiquitinated by TRIM31 via 'Lys-48'-linked ubiquitination, leading to its degradation by the proteasome. Ubiquitinated at Lys-687 by the SCF(FBXL2) complex, leading to its degradation by the proteasome. Ubiquitinated by TRIM35 via 'lys-48' and 'Lys-63'-linked ubiquitination leading to inhibition of NLRP3 inflammasome activation. Undergoes 'Lys-27'-linked polyubiquitination by MARCHF5, leading to NLRP3-NEK7 complex formation and NLRP3 oligomerization. Post-translationally, the disulfide bond in the pyrin domain might play a role in reactive oxygen species-mediated activation. In terms of processing, palmitoylation by ZDHHC12 promotes NLRP3 degradation by the chaperone-mediated autophagy pathway (CMA) and therefore limits NLRP3 inflammasome activation. Interaction with ZDHHC12, and hence NLRP3 palmitoylation, is enhanced by ABHD8. Following palmitoylation, HSPA8/HSC70 recognizes and binds the KFERQ-like motifs on NLRP3 and promotes NLRP3 recruitment to lysosomes, where it is degraded via the chaperone-mediated autophagy pathway in a LAMP2-dependent process. Palmitoylation at Cys-834 and Cys-835 by ZDHHC5 enhances its binding to NEK7 leading to inflammasome assembly and activation. Palmitoylation at Cys-126 and Cys-955 by ZDHHC1 facilitates phosphorylation at Ser-261 by LATS1 and LATS2, promoting its relocalization to the microtubule organizing center (MTOC), where NLRP3 is activated by NEK7, leading to inflammasome assembly and activation. Depalmitoylated by ABHD17A. Degraded via selective autophagy following interaction with Irgm1. Irgm1 promotes NLRP3 recruitment to autophagosome membranes, promoting its SQSTM1/p62-dependent autophagy-dependent degradation. Expressed with high levels in peripheral blood leukocytes, including Th2 lymphocytes and macrophages. Expressed at low levels in resting osteoblasts (at protein level).

It localises to the cytoplasm. Its subcellular location is the cytosol. It is found in the inflammasome. The protein localises to the cytoskeleton. The protein resides in the microtubule organizing center. It localises to the golgi apparatus membrane. Its subcellular location is the endoplasmic reticulum. It is found in the mitochondrion. The protein localises to the secreted. The protein resides in the nucleus. It catalyses the reaction ATP + H2O = ADP + phosphate + H(+). With respect to regulation, under resting conditions, NLRP3 binds ADP and is autoinhibited. Inactive NLRP3 forms homodecameric double-ring cages that hide pyrin domains within NACHT-LRR rings to avoid premature activation. NLRP3 activation stimuli include extracellular ATP, nigericin, reactive oxygen species, crystals of monosodium urate or cholesterol, amyloid-beta fibers, environmental or industrial particles and nanoparticles, such as asbestos, silica, aluminum salts, cytosolic dsRNA, etc. Almost all stimuli trigger intracellular K(+) efflux. These stimuli lead to membrane perturbations that induce activation of NLRP3. Upon activation, NLRP3 is transported to microtubule organizing center (MTOC), where it is unlocked by NEK7, leading to its relocalization to dispersed trans-Golgi network (dTGN) vesicle membranes and recruitment of PYCARD/ASC for the formation of an active inflammasome complex. NEK7-activated NLRP3 forms a disk-shaped inflammasome. NLRP3 and PYCARD/ASC interact via their respective pyrin domains; interaction initiates speck formation (nucleation) which greatly enhances further addition of soluble PYCARD/ASC molecules to the speck in a prion-like polymerization process. Clustered PYCARD/ASC nucleates the formation of CASP1 filaments through the interaction of their respective CARD domains, acting as a platform for CASP1 polymerization and activation. Active CASP1 then processes IL1B and IL18 precursors, leading to the release of mature cytokines in the extracellular milieu and inflammatory response. NLRP3 inflammasome assembly is inhibited by IRGM, which impedes NLRP3 oligomerization. NLRP3 inflammasome is inhibited by cyclic AMP (cAMP), which directly binds NLRP3; inhibition is relieved by calcium-sensing receptor CASR, which inhibits production of cAMP. Specifically inhibited by sulfonylurea MCC950 (also named CP-456,773, CRID3), a potent and specific small-molecule inhibitor of the NLRP3 inflammasome that acts by preventing ATP hydrolysis. In terms of biological role, sensor component of the NLRP3 inflammasome, which mediates inflammasome activation in response to defects in membrane integrity, leading to secretion of inflammatory cytokines IL1B and IL18 and pyroptosis. In response to pathogens and other damage-associated signals that affect the integrity of membranes, initiates the formation of the inflammasome polymeric complex composed of NLRP3, CASP1 and PYCARD/ASC. Recruitment of pro-caspase-1 (proCASP1) to the NLRP3 inflammasome promotes caspase-1 (CASP1) activation, which subsequently cleaves and activates inflammatory cytokines IL1B and IL18 and gasdermin-D (GSDMD), promoting cytokine secretion and pyroptosis. Activation of NLRP3 inflammasome is also required for HMGB1 secretion; stimulating inflammatory responses. Under resting conditions, ADP-bound NLRP3 is autoinhibited. NLRP3 activation stimuli include extracellular ATP, nigericin, reactive oxygen species, crystals of monosodium urate or cholesterol, amyloid-beta fibers, environmental or industrial particles and nanoparticles, such as asbestos, silica, aluminum salts, cytosolic dsRNA, etc. Almost all stimuli trigger intracellular K(+) efflux. These stimuli lead to membrane perturbation and activation of NLRP3. Upon activation, NLRP3 is transported to microtubule organizing center (MTOC), where it is unlocked by NEK7, leading to its relocalization to dispersed trans-Golgi network (dTGN) vesicle membranes and formation of an active inflammasome complex. Associates with dTGN vesicle membranes by binding to phosphatidylinositol 4-phosphate (PtdIns4P). Shows ATPase activity. Functionally, independently of inflammasome activation, regulates the differentiation of T helper 2 (Th2) cells and has a role in Th2 cell-dependent asthma and tumor growth. During Th2 differentiation, required for optimal IRF4 binding to IL4 promoter and for IRF4-dependent IL4 transcription. Binds to the consensus DNA sequence 5'-GRRGGNRGAG-3'. May also participate in the transcription of IL5, IL13, GATA3, CCR3, CCR4 and MAF. In Mus musculus (Mouse), this protein is NACHT, LRR and PYD domains-containing protein 3.